Here is a 122-residue protein sequence, read N- to C-terminus: Fluoride-specific ion channel FluC (122 aa).

4 helical membrane-spanning segments follow: residues 5-25 (FLIG…SGII), 29-49 (FGIP…VGFL), 65-85 (FIIT…YESF), and 93-113 (FIKS…MIYF). Residues Gly-72 and Thr-75 each coordinate Na(+).

It belongs to the fluoride channel Fluc/FEX (TC 1.A.43) family.

Its subcellular location is the cell membrane. It catalyses the reaction fluoride(in) = fluoride(out). Its activity is regulated as follows. Na(+) is not transported, but it plays an essential structural role and its presence is essential for fluoride channel function. In terms of biological role, fluoride-specific ion channel. Important for reducing fluoride concentration in the cell, thus reducing its toxicity. In Methanococcus vannielii (strain ATCC 35089 / DSM 1224 / JCM 13029 / OCM 148 / SB), this protein is Fluoride-specific ion channel FluC.